The sequence spans 215 residues: Cytochrome b6 (215 aa).

The helical transmembrane segment at 32 to 52 (IFYCLGGITLTCFLVQVATGF) threads the bilayer. Cys35 contacts heme c. Heme b is bound by residues His86 and His100. The next 3 helical transmembrane spans lie at 90–110 (ASMMVLMMILHVFRVYLTGGF), 116–136 (LTWVTGVVLAVLTASFGVTGY), and 186–206 (LHTFVLPLLTAVFMLMHFLMI). Heme b-binding residues include His187 and His202.

Belongs to the cytochrome b family. PetB subfamily. In terms of assembly, the 4 large subunits of the cytochrome b6-f complex are cytochrome b6, subunit IV (17 kDa polypeptide, PetD), cytochrome f and the Rieske protein, while the 4 small subunits are PetG, PetL, PetM and PetN. The complex functions as a dimer. Heme b is required as a cofactor. Heme c serves as cofactor.

The protein resides in the plastid. Its subcellular location is the chloroplast thylakoid membrane. Its function is as follows. Component of the cytochrome b6-f complex, which mediates electron transfer between photosystem II (PSII) and photosystem I (PSI), cyclic electron flow around PSI, and state transitions. The chain is Cytochrome b6 from Morus indica (Mulberry).